The sequence spans 330 residues: Small ribosomal subunit protein uS15m (330 aa).

This sequence belongs to the universal ribosomal protein uS15 family. In terms of assembly, component of the mitochondrial ribosome small subunit (28S) which comprises a 12S rRNA and about 30 distinct proteins.

Its subcellular location is the mitochondrion. The chain is Small ribosomal subunit protein uS15m (mrps-15) from Caenorhabditis elegans.